The chain runs to 810 residues: Phospholipase D alpha 2 (810 aa).

Residues 1-126 (MEECLLHGRL…LHGEEVDRWV (126 aa)) form the C2 domain. Residue D187 participates in Ca(2+) binding. Positions 327-365 (TMFTHHQKIVVVDSEMPSGGSRSRRIVSFVGGLDLCDGR) constitute a PLD phosphodiesterase 1 domain. Active-site residues include H332, K334, and D339. A 1,2-diacyl-sn-glycero-3-phosphate is bound at residue H332. Ca(2+) is bound by residues H371 and H405. Residues Q521 and H661 each coordinate a 1,2-diacyl-sn-glycero-3-phosphate. Residues 656–683 (FMIYVHTKMMIVDDEYIIIGSANINQRS) form the PLD phosphodiesterase 2 domain. Active-site residues include H661, K663, and D668. Position 722 (E722) interacts with Ca(2+).

It belongs to the phospholipase D family. C2-PLD subfamily. Ca(2+) serves as cofactor. As to expression, highly expressed in roots, stems and flowers, moderately in leaves, seedlings and siliques. Not detected in dry seeds.

The protein localises to the cytoplasm. The protein resides in the membrane. It is found in the vacuole. It localises to the cytoplasmic vesicle. Its subcellular location is the clathrin-coated vesicle. It catalyses the reaction a 1,2-diacyl-sn-glycero-3-phosphocholine + H2O = a 1,2-diacyl-sn-glycero-3-phosphate + choline + H(+). In terms of biological role, hydrolyzes glycerol-phospholipids at the terminal phosphodiesteric bond to generate phosphatidic acids (PA). Plays an important role in various cellular processes, including phytohormone action and response to stress, characterized by acidification of the cell. The chain is Phospholipase D alpha 2 from Arabidopsis thaliana (Mouse-ear cress).